The sequence spans 869 residues: Iron-sulfur cluster assembly SufBD family protein ML0593 (869 aa).

In terms of domain architecture, DOD-type homing endonuclease spans 344 to 477 (LLGLWLGDGH…VRQLAIGCGL (134 aa)).

The protein belongs to the iron-sulfur cluster assembly SufBD family. In terms of processing, this protein undergoes a protein self splicing that involves a post-translational excision of the intervening region (intein) followed by peptide ligation.

The chain is Iron-sulfur cluster assembly SufBD family protein ML0593 from Mycobacterium leprae (strain TN).